A 124-amino-acid polypeptide reads, in one-letter code: Small ribosomal subunit protein uS12 (124 aa).

At aspartate 89 the chain carries 3-methylthioaspartic acid.

This sequence belongs to the universal ribosomal protein uS12 family. Part of the 30S ribosomal subunit. Contacts proteins S8 and S17. May interact with IF1 in the 30S initiation complex.

With S4 and S5 plays an important role in translational accuracy. Functionally, interacts with and stabilizes bases of the 16S rRNA that are involved in tRNA selection in the A site and with the mRNA backbone. Located at the interface of the 30S and 50S subunits, it traverses the body of the 30S subunit contacting proteins on the other side and probably holding the rRNA structure together. The combined cluster of proteins S8, S12 and S17 appears to hold together the shoulder and platform of the 30S subunit. This Erwinia tasmaniensis (strain DSM 17950 / CFBP 7177 / CIP 109463 / NCPPB 4357 / Et1/99) protein is Small ribosomal subunit protein uS12.